We begin with the raw amino-acid sequence, 129 residues long: Follitropin subunit beta (129 aa).

Residues 1–20 form the signal peptide; sequence MKTAQFYIFFFCWKAIWCNG. Intrachain disulfides connect cysteine 21–cysteine 69, cysteine 35–cysteine 84, cysteine 38–cysteine 122, cysteine 46–cysteine 100, cysteine 50–cysteine 102, and cysteine 105–cysteine 112. Residues asparagine 25 and asparagine 42 are each glycosylated (N-linked (GlcNAc...) asparagine).

This sequence belongs to the glycoprotein hormones subunit beta family. In terms of assembly, heterodimer. The active follitropin is a heterodimer composed of an alpha chain/CGA shared with other hormones and a unique beta chain/FSHB shown here.

The protein resides in the secreted. Functionally, together with the alpha chain CGA constitutes follitropin, the follicle-stimulating hormone, and provides its biological specificity to the hormone heterodimer. Binds FSHR, a G protein-coupled receptor, on target cells to activate downstream signaling pathways. Follitropin is involved in follicle development and spermatogenesis in reproductive organs. In Monodelphis domestica (Gray short-tailed opossum), this protein is Follitropin subunit beta (FSHB).